Here is an 89-residue protein sequence, read N- to C-terminus: Small ribosomal subunit protein uS15 (89 aa).

The protein belongs to the universal ribosomal protein uS15 family. As to quaternary structure, part of the 30S ribosomal subunit. Forms a bridge to the 50S subunit in the 70S ribosome, contacting the 23S rRNA.

Functionally, one of the primary rRNA binding proteins, it binds directly to 16S rRNA where it helps nucleate assembly of the platform of the 30S subunit by binding and bridging several RNA helices of the 16S rRNA. Forms an intersubunit bridge (bridge B4) with the 23S rRNA of the 50S subunit in the ribosome. The sequence is that of Small ribosomal subunit protein uS15 from Anaeromyxobacter dehalogenans (strain 2CP-1 / ATCC BAA-258).